The chain runs to 293 residues: Succinate--CoA ligase [ADP-forming] subunit alpha (293 aa).

CoA is bound by residues 21–24 (TGKQ), lysine 47, and 99–101 (ITE). Residue tyrosine 162 coordinates substrate. Residue histidine 249 is the Tele-phosphohistidine intermediate of the active site.

Belongs to the succinate/malate CoA ligase alpha subunit family. As to quaternary structure, heterotetramer of two alpha and two beta subunits.

It carries out the reaction succinate + ATP + CoA = succinyl-CoA + ADP + phosphate. The enzyme catalyses GTP + succinate + CoA = succinyl-CoA + GDP + phosphate. Its pathway is carbohydrate metabolism; tricarboxylic acid cycle; succinate from succinyl-CoA (ligase route): step 1/1. Succinyl-CoA synthetase functions in the citric acid cycle (TCA), coupling the hydrolysis of succinyl-CoA to the synthesis of either ATP or GTP and thus represents the only step of substrate-level phosphorylation in the TCA. The alpha subunit of the enzyme binds the substrates coenzyme A and phosphate, while succinate binding and nucleotide specificity is provided by the beta subunit. This is Succinate--CoA ligase [ADP-forming] subunit alpha from Methanothermobacter thermautotrophicus (strain ATCC 29096 / DSM 1053 / JCM 10044 / NBRC 100330 / Delta H) (Methanobacterium thermoautotrophicum).